The chain runs to 456 residues: Protein COBRA (456 aa).

Positions Met-1–Ala-36 are cleaved as a signal peptide. 9 N-linked (GlcNAc...) asparagine glycosylation sites follow: Asn-45, Asn-170, Asn-178, Asn-217, Asn-242, Asn-258, Asn-328, Asn-343, and Asn-362. Asn-431 carries GPI-anchor amidated asparagine lipidation. Residues Gly-432–Ala-456 constitute a propeptide, removed in mature form.

This sequence belongs to the COBRA family. In terms of tissue distribution, expressed in roots, stems, leaves, flowers and siliques. Up-regulated in the root zone of rapid longitudinal expansion.

The protein resides in the lateral cell membrane. In terms of biological role, involved in determining the orientation of cell expansion, probably by playing an important role in cellulose deposition. May act by recruiting cellulose synthesizing complexes to discrete positions on the cell surface. The sequence is that of Protein COBRA (COB) from Arabidopsis thaliana (Mouse-ear cress).